Consider the following 247-residue polypeptide: Pyridoxine 5'-phosphate synthase (247 aa).

N12 contributes to the 3-amino-2-oxopropyl phosphate binding site. D14–H15 is a binding site for 1-deoxy-D-xylulose 5-phosphate. Residue R23 coordinates 3-amino-2-oxopropyl phosphate. H48 (proton acceptor) is an active-site residue. Residues R50 and H55 each contribute to the 1-deoxy-D-xylulose 5-phosphate site. The Proton acceptor role is filled by E75. T105 lines the 1-deoxy-D-xylulose 5-phosphate pocket. H196 functions as the Proton donor in the catalytic mechanism. 3-amino-2-oxopropyl phosphate contacts are provided by residues G197 and G218–H219.

This sequence belongs to the PNP synthase family. In terms of assembly, homooctamer; tetramer of dimers.

It is found in the cytoplasm. The enzyme catalyses 3-amino-2-oxopropyl phosphate + 1-deoxy-D-xylulose 5-phosphate = pyridoxine 5'-phosphate + phosphate + 2 H2O + H(+). The protein operates within cofactor biosynthesis; pyridoxine 5'-phosphate biosynthesis; pyridoxine 5'-phosphate from D-erythrose 4-phosphate: step 5/5. In terms of biological role, catalyzes the complicated ring closure reaction between the two acyclic compounds 1-deoxy-D-xylulose-5-phosphate (DXP) and 3-amino-2-oxopropyl phosphate (1-amino-acetone-3-phosphate or AAP) to form pyridoxine 5'-phosphate (PNP) and inorganic phosphate. The polypeptide is Pyridoxine 5'-phosphate synthase (Pseudomonas fluorescens (strain SBW25)).